Here is a 248-residue protein sequence, read N- to C-terminus: 2,3-bisphosphoglycerate-dependent phosphoglycerate mutase (248 aa).

Residues 8–15 (RHGESGWN) and Arg58 each bind substrate. The Tele-phosphohistidine intermediate role is filled by His9. A disordered region spans residues 82–101 (GTGEDRTEREDGSRKDRKEK). The Proton donor/acceptor role is filled by Glu124. Substrate-binding positions include 124–127 (ERYY) and Lys135.

Belongs to the phosphoglycerate mutase family. BPG-dependent PGAM subfamily.

The catalysed reaction is (2R)-2-phosphoglycerate = (2R)-3-phosphoglycerate. It functions in the pathway carbohydrate degradation; glycolysis; pyruvate from D-glyceraldehyde 3-phosphate: step 3/5. Catalyzes the interconversion of 2-phosphoglycerate and 3-phosphoglycerate. In Methanosarcina acetivorans (strain ATCC 35395 / DSM 2834 / JCM 12185 / C2A), this protein is 2,3-bisphosphoglycerate-dependent phosphoglycerate mutase.